The primary structure comprises 282 residues: 3-methyl-2-oxobutanoate hydroxymethyltransferase (282 aa).

Mg(2+) contacts are provided by aspartate 46 and aspartate 85. 3-methyl-2-oxobutanoate contacts are provided by residues 46-47, aspartate 85, and lysine 115; that span reads DS. Glutamate 117 is a binding site for Mg(2+). The Proton acceptor role is filled by glutamate 184.

It belongs to the PanB family. In terms of assembly, homodecamer; pentamer of dimers. It depends on Mg(2+) as a cofactor.

Its subcellular location is the cytoplasm. The catalysed reaction is 3-methyl-2-oxobutanoate + (6R)-5,10-methylene-5,6,7,8-tetrahydrofolate + H2O = 2-dehydropantoate + (6S)-5,6,7,8-tetrahydrofolate. Its pathway is cofactor biosynthesis; (R)-pantothenate biosynthesis; (R)-pantoate from 3-methyl-2-oxobutanoate: step 1/2. Catalyzes the reversible reaction in which hydroxymethyl group from 5,10-methylenetetrahydrofolate is transferred onto alpha-ketoisovalerate to form ketopantoate. In Alkaliphilus metalliredigens (strain QYMF), this protein is 3-methyl-2-oxobutanoate hydroxymethyltransferase.